The sequence spans 467 residues: UDP-N-acetylmuramate--L-alanine ligase (467 aa).

114–120 serves as a coordination point for ATP; that stretch reads GTHGKTT.

The protein belongs to the MurCDEF family.

Its subcellular location is the cytoplasm. It carries out the reaction UDP-N-acetyl-alpha-D-muramate + L-alanine + ATP = UDP-N-acetyl-alpha-D-muramoyl-L-alanine + ADP + phosphate + H(+). It participates in cell wall biogenesis; peptidoglycan biosynthesis. Cell wall formation. The sequence is that of UDP-N-acetylmuramate--L-alanine ligase from Rhodopseudomonas palustris (strain BisA53).